The chain runs to 399 residues: Dual-specificity RNA methyltransferase RlmN (399 aa).

The active-site Proton acceptor is glutamate 120. The Radical SAM core domain occupies 126 to 367; it reads EEGRGTLCVS…SPVRTPRGRD (242 aa). Cysteines 133 and 372 form a disulfide. Residues cysteine 140, cysteine 144, and cysteine 147 each coordinate [4Fe-4S] cluster. S-adenosyl-L-methionine contacts are provided by residues 198–199, serine 230, 252–254, and asparagine 329; these read GE and SLH. Cysteine 372 acts as the S-methylcysteine intermediate in catalysis.

It belongs to the radical SAM superfamily. RlmN family. The cofactor is [4Fe-4S] cluster.

The protein localises to the cytoplasm. The catalysed reaction is adenosine(2503) in 23S rRNA + 2 reduced [2Fe-2S]-[ferredoxin] + 2 S-adenosyl-L-methionine = 2-methyladenosine(2503) in 23S rRNA + 5'-deoxyadenosine + L-methionine + 2 oxidized [2Fe-2S]-[ferredoxin] + S-adenosyl-L-homocysteine. The enzyme catalyses adenosine(37) in tRNA + 2 reduced [2Fe-2S]-[ferredoxin] + 2 S-adenosyl-L-methionine = 2-methyladenosine(37) in tRNA + 5'-deoxyadenosine + L-methionine + 2 oxidized [2Fe-2S]-[ferredoxin] + S-adenosyl-L-homocysteine. Specifically methylates position 2 of adenine 2503 in 23S rRNA and position 2 of adenine 37 in tRNAs. m2A2503 modification seems to play a crucial role in the proofreading step occurring at the peptidyl transferase center and thus would serve to optimize ribosomal fidelity. This Parvibaculum lavamentivorans (strain DS-1 / DSM 13023 / NCIMB 13966) protein is Dual-specificity RNA methyltransferase RlmN.